Reading from the N-terminus, the 397-residue chain is Elongation factor Tu (397 aa).

The region spanning 10–207 (KPHVNVGTIG…TLDTYIPEPE (198 aa)) is the tr-type G domain. A G1 region spans residues 19–26 (GHVDHGKT). 19–26 (GHVDHGKT) contacts GTP. A Mg(2+)-binding site is contributed by Thr26. Positions 60–64 (GITIN) are G2. The tract at residues 81–84 (DCPG) is G3. Residues 81–85 (DCPGH) and 136–139 (NKAD) each bind GTP. Residues 136–139 (NKAD) are G4. A G5 region spans residues 174 to 176 (SAL).

Belongs to the TRAFAC class translation factor GTPase superfamily. Classic translation factor GTPase family. EF-Tu/EF-1A subfamily. Monomer.

It localises to the cytoplasm. The catalysed reaction is GTP + H2O = GDP + phosphate + H(+). Functionally, GTP hydrolase that promotes the GTP-dependent binding of aminoacyl-tRNA to the A-site of ribosomes during protein biosynthesis. The chain is Elongation factor Tu from Pseudomonas fluorescens (strain ATCC BAA-477 / NRRL B-23932 / Pf-5).